The chain runs to 131 residues: Small ribosomal subunit protein uS8c (131 aa).

The protein belongs to the universal ribosomal protein uS8 family. In terms of assembly, part of the 30S ribosomal subunit.

It is found in the plastid. The protein localises to the chloroplast. Functionally, one of the primary rRNA binding proteins, it binds directly to 16S rRNA central domain where it helps coordinate assembly of the platform of the 30S subunit. This is Small ribosomal subunit protein uS8c (rps8) from Tupiella akineta (Green alga).